A 418-amino-acid polypeptide reads, in one-letter code: GTPase Obg (418 aa).

An Obg domain is found at 1-156 (MKFIDEITLN…KKLTLVLKVL (156 aa)). Positions 157 to 324 (ADVGFVGKPS…LKEALWQSVK (168 aa)) constitute an OBG-type G domain. GTP contacts are provided by residues 163–170 (GKPSAGKS), 188–192 (FTTLV), 209–212 (DLPG), 278–281 (NKKD), and 305–307 (SAL). Residues Ser170 and Thr190 each coordinate Mg(2+). The region spanning 339-417 (VFINFEADFN…IYDYEFVWGN (79 aa)) is the OCT domain.

Belongs to the TRAFAC class OBG-HflX-like GTPase superfamily. OBG GTPase family. As to quaternary structure, monomer. Requires Mg(2+) as cofactor.

The protein resides in the cytoplasm. In terms of biological role, an essential GTPase which binds GTP, GDP and possibly (p)ppGpp with moderate affinity, with high nucleotide exchange rates and a fairly low GTP hydrolysis rate. Plays a role in control of the cell cycle, stress response, ribosome biogenesis and in those bacteria that undergo differentiation, in morphogenesis control. This Mycoplasmopsis pulmonis (strain UAB CTIP) (Mycoplasma pulmonis) protein is GTPase Obg.